The sequence spans 235 residues: MSIEVVEVRPHERHFGVYALKFEDGSERLATRNLTPGKRVYGERLVKWGGAEYREWNPYRSKLAAAIANGIKFVPIQEGTHILYLGAASGTTPSHMSDIVGERGLIYSVEFSPRVFREFMEKLVDQGRRNVVPILGDARFPYQYAHYVKGVDVAYIDVAQPAQAKILADNADYFLKPGGYVMLVIKAMSIDVTAPATETFKQEINTLKERGFEILETVHLEPYDTAHAMVVARKR.

S-adenosyl-L-methionine contacts are provided by residues 91-92 (TT), 110-111 (EF), 137-138 (DA), and 157-160 (DVAQ).

This sequence belongs to the methyltransferase superfamily. Fibrillarin family. Interacts with nop5. Component of box C/D small ribonucleoprotein (sRNP) particles that contain rpl7ae, FlpA and nop5, plus a guide RNA.

Functionally, involved in pre-rRNA and tRNA processing. Utilizes the methyl donor S-adenosyl-L-methionine to catalyze the site-specific 2'-hydroxyl methylation of ribose moieties in rRNA and tRNA. Site specificity is provided by a guide RNA that base pairs with the substrate. Methylation occurs at a characteristic distance from the sequence involved in base pairing with the guide RNA. This chain is Fibrillarin-like rRNA/tRNA 2'-O-methyltransferase, found in Pyrobaculum neutrophilum (strain DSM 2338 / JCM 9278 / NBRC 100436 / V24Sta) (Thermoproteus neutrophilus).